We begin with the raw amino-acid sequence, 420 residues long: Subtilisin-like protease 7 (420 aa).

The first 20 residues, 1-20, serve as a signal peptide directing secretion; that stretch reads MGFITKAIPLALAAASVING. Residues 21-119 constitute a propeptide that is removed on maturation; that stretch reads AEIMETRAGV…IERDARVQIN (99 aa). Residues 36 to 118 form the Inhibitor I9 domain; sequence KYIVVMNDGM…YIERDARVQI (83 aa). One can recognise a Peptidase S8 domain in the interval 129–413; it reads SWGLARVGSK…SFPLNIYEEQ (285 aa). Residues aspartate 161 and histidine 192 each act as charge relay system in the active site. N-linked (GlcNAc...) asparagine glycans are attached at residues asparagine 222 and asparagine 252. The active-site Charge relay system is serine 346. N-linked (GlcNAc...) asparagine glycosylation occurs at asparagine 396.

The protein belongs to the peptidase S8 family.

It is found in the secreted. In terms of biological role, secreted subtilisin-like serine protease with keratinolytic activity that contributes to pathogenicity. This is Subtilisin-like protease 7 (SUB7) from Arthroderma benhamiae (strain ATCC MYA-4681 / CBS 112371) (Trichophyton mentagrophytes).